Consider the following 331-residue polypeptide: Tetraspanin-10 (331 aa).

Residues 1 to 34 (MKEEECSPLLSQDTAGREHPLTRNSPPTANIPCP) are disordered. The Cytoplasmic portion of the chain corresponds to 1–76 (MKEEECSPLL…LSTGSNCVKY (76 aa)). The helical transmembrane segment at 77-97 (LIFLSNFLFSLPSLLALAAGL) threads the bilayer. At 98 to 120 (WGLTVKRSQGIGWGGPVPTDPML) the chain is on the extracellular side. A helical transmembrane segment spans residues 121–141 (MLVLGGLVVSVVSLSGCLGAF). Over 142-152 (CENSCLLHWYC) the chain is Cytoplasmic. A helical membrane pass occupies residues 153–173 (GAVLFCLALEALAGVLMVTLW). Topologically, residues 174 to 331 (KPLQDSLKYT…AAEDIEAGPL (158 aa)) are extracellular. Cystine bridges form between Cys-210–Cys-277, Cys-211–Cys-241, Cys-227–Cys-235, and Cys-242–Cys-256. An N-linked (GlcNAc...) asparagine glycan is attached at Asn-226.

The protein belongs to the tetraspanin (TM4SF) family. Interacts with ADAM10.

Its subcellular location is the cell membrane. In terms of biological role, part of TspanC8 subgroup, composed of 6 members that interact with the transmembrane metalloprotease ADAM10. This interaction is required for ADAM10 exit from the endoplasmic reticulum and for enzymatic maturation and trafficking to the cell surface as well as substrate specificity. Different TspanC8/ADAM10 complexes have distinct substrates. This chain is Tetraspanin-10 (Tspan10), found in Mus musculus (Mouse).